The primary structure comprises 66 residues: Large ribosomal subunit protein bL35 (66 aa).

The span at 1 to 16 shows a compositional bias: basic residues; sequence MPKQKTHRASAKRFKR. The tract at residues 1-21 is disordered; it reads MPKQKTHRASAKRFKRTGSGG.

The protein belongs to the bacterial ribosomal protein bL35 family.

This chain is Large ribosomal subunit protein bL35, found in Streptococcus agalactiae serotype Ia (strain ATCC 27591 / A909 / CDC SS700).